We begin with the raw amino-acid sequence, 416 residues long: Actin-like protein 9 (416 aa).

Residues 1–23 (MDPNQGNPLEPQDSPEIPKPSLN) form a disordered region.

This sequence belongs to the actin family. As to quaternary structure, interacts with ACTL7A.

It is found in the cytoplasmic vesicle. The protein localises to the secretory vesicle. The protein resides in the acrosome. Its subcellular location is the cytoplasm. It localises to the cytoskeleton. It is found in the perinuclear theca. Functionally, testis-specic protein that plays an important role in fusion of proacrosomal vesicles and perinuclear theca formation. The polypeptide is Actin-like protein 9 (ACTL9) (Bos taurus (Bovine)).